The primary structure comprises 289 residues: MHKHNNGLKTAALFGVLWAVLLGLGAIIAAGTRSTTPIWIMALIGVATTAYGYWNSDKIAIRSMAAYPVTEAQAPQLYQIVRELSVRANKPMPRIYLSPTMTPNAFATGRNPKNAAVCCTEGILHLLDARELRGVLGHELMHVYNRDILTSSVVAAVAGVITSVGQMLLIFGSGDRRNANPLATIAMALLAPFAASLIQMAISRTREFDADEDGAELTGDPLALASALRKIESGVSQLPLPPDQRLVNASHLMIANPFRGGGIRRMFSTHPPMKERISRLERMAGRPLL.

2 helical membrane-spanning segments follow: residues 11–31 (AALF…IAAG) and 34–54 (STTP…YGYW). His138 serves as a coordination point for Zn(2+). The active site involves Glu139. Residue His142 participates in Zn(2+) binding. The next 2 membrane-spanning stretches (helical) occupy residues 152–172 (SVVA…LIFG) and 182–202 (LATI…QMAI). Residue Glu207 coordinates Zn(2+).

Belongs to the peptidase M48B family. Zn(2+) serves as cofactor.

It is found in the cell membrane. The polypeptide is Protease HtpX homolog (Paenarthrobacter aurescens (strain TC1)).